Here is a 257-residue protein sequence, read N- to C-terminus: MAPCKPRTFTAGEDPLTKFDGAISVATMPRPADRQFLFHGIMRPSRGIYAKLVATGKKPPTHFHPSQWEFFRVLRGNLTVDINGVPVHRTVDDGEMAVPPYTHHVIYGTPGTEMNEVEFLVSATDEEEGATAMDQEFFENWYGYQEDIFQRGEKIDLIQVLAMFDAGGTYLSPPWWVPFRAWVGLILGIVIGRWIGGLLGYAPFYPEWTTNWDAACDRMEQSWFQRRYADRGAQQRAREKFQVQKGQGTVAKGEKSE.

The protein belongs to the oxidoreductase OpS7 family.

The protein operates within secondary metabolite biosynthesis; terpenoid biosynthesis. Part of the gene cluster that mediates the biosynthesis of yanuthone D, a fungal isoprenoid epoxycyclohexenone that acts as an antibiotic against fungi and bacteria. The first step of the pathway is the synthesis of 6-methylsalicylic acid (6-MSA) by the polyketide synthase yanA. 6-MSA is then converted to m-cresol by the decarboxylase yanB. The cytochrome P450 monooxygenase yanC then catalyzes the oxidation of m-cresol to toluquinol. Epoxidation of toluquinol is then performed by the short chain dehydrogenase yanD, with the help of yanE, and a further prenylation by yanG leads to 7-deacetoxyyanuthone A. The next step is the hydroxylation of C-22 of 7-deacetoxyyanuthone A by the cytochrome P450 monooxygenase yanH to yield 22-deacetylyanuthone A. O-Mevalon transferase yanI then attaches mevalon to the hydroxyl group of 22-deacetylyanuthone A to produce yanuthone E. Finally, the FAD-dependent monooxygenase yanF oxidizes the hydroxyl group at C15 of yanuthone E to form yanuthone D. Furthermore, several branching points in the pathway lead to the production of yanuthones F and G from 7-deacetoxyyanuthone A; yanuthones H and I from 22-deacetylyanuthone A; and yanuthone J from yanuthone E. YanE is also involved in the synthesis of yanuthone X1 which does not have 6-methylsalicylic acid (6-MSA) as precursor. In Aspergillus niger (strain ATCC 1015 / CBS 113.46 / FGSC A1144 / LSHB Ac4 / NCTC 3858a / NRRL 328 / USDA 3528.7), this protein is Probable oxidoreductase yanE.